A 487-amino-acid chain; its full sequence is N-succinylglutamate 5-semialdehyde dehydrogenase (487 aa).

221–226 (GSSDTG) is a binding site for NAD(+). Catalysis depends on residues Glu-244 and Cys-278.

It belongs to the aldehyde dehydrogenase family. AstD subfamily.

The catalysed reaction is N-succinyl-L-glutamate 5-semialdehyde + NAD(+) + H2O = N-succinyl-L-glutamate + NADH + 2 H(+). The protein operates within amino-acid degradation; L-arginine degradation via AST pathway; L-glutamate and succinate from L-arginine: step 4/5. Catalyzes the NAD-dependent reduction of succinylglutamate semialdehyde into succinylglutamate. The sequence is that of N-succinylglutamate 5-semialdehyde dehydrogenase from Burkholderia cenocepacia (strain HI2424).